We begin with the raw amino-acid sequence, 125 residues long: Small ribosomal subunit protein uS11 (125 aa).

It belongs to the universal ribosomal protein uS11 family. In terms of assembly, part of the 30S ribosomal subunit. Interacts with proteins S7 and S18. Binds to IF-3.

Located on the platform of the 30S subunit, it bridges several disparate RNA helices of the 16S rRNA. Forms part of the Shine-Dalgarno cleft in the 70S ribosome. This is Small ribosomal subunit protein uS11 from Coprothermobacter proteolyticus (strain ATCC 35245 / DSM 5265 / OCM 4 / BT).